The following is a 288-amino-acid chain: Formamidopyrimidine-DNA glycosylase (288 aa).

The Schiff-base intermediate with DNA role is filled by P2. The active-site Proton donor is E3. K58 (proton donor; for beta-elimination activity) is an active-site residue. 3 residues coordinate DNA: H101, R124, and R169. The FPG-type zinc-finger motif lies at 254-288 (LVYDRAGLPCRVCGTPIRQIVQGQRSTFYCPACQR). The Proton donor; for delta-elimination activity role is filled by R278.

This sequence belongs to the FPG family. Monomer. Zn(2+) is required as a cofactor.

The enzyme catalyses Hydrolysis of DNA containing ring-opened 7-methylguanine residues, releasing 2,6-diamino-4-hydroxy-5-(N-methyl)formamidopyrimidine.. It catalyses the reaction 2'-deoxyribonucleotide-(2'-deoxyribose 5'-phosphate)-2'-deoxyribonucleotide-DNA = a 3'-end 2'-deoxyribonucleotide-(2,3-dehydro-2,3-deoxyribose 5'-phosphate)-DNA + a 5'-end 5'-phospho-2'-deoxyribonucleoside-DNA + H(+). Its function is as follows. Involved in base excision repair of DNA damaged by oxidation or by mutagenic agents. Acts as a DNA glycosylase that recognizes and removes damaged bases. Has a preference for oxidized purines, such as 7,8-dihydro-8-oxoguanine (8-oxoG). Has AP (apurinic/apyrimidinic) lyase activity and introduces nicks in the DNA strand. Cleaves the DNA backbone by beta-delta elimination to generate a single-strand break at the site of the removed base with both 3'- and 5'-phosphates. The polypeptide is Formamidopyrimidine-DNA glycosylase (Ralstonia nicotianae (strain ATCC BAA-1114 / GMI1000) (Ralstonia solanacearum)).